A 444-amino-acid chain; its full sequence is S-locus-specific glycoprotein BS29-1 (444 aa).

Positions 1 to 28 are cleaved as a signal peptide; sequence MRGVIPNYHHSYTLLFFVILVLFPHVFS. Positions 31–159 constitute a Bulb-type lectin domain; the sequence is TLSPNEALTI…KTTALDRFMW (129 aa). N43, N125, N180, N243, and N396 each carry an N-linked (GlcNAc...) asparagine glycan. Residues 356–437 form the PAN domain; it reads CGEGDGFLRM…GGQDLYLKVA (82 aa). Intrachain disulfides connect C387–C412 and C395–C397.

As to expression, stigma.

In terms of biological role, involved in sporophytic self-incompatibility system (the inability of flowering plants to achieve self-fertilization). The chain is S-locus-specific glycoprotein BS29-1 (SLSG) from Brassica oleracea var. alboglabra (Chinese kale).